A 158-amino-acid polypeptide reads, in one-letter code: Transcription elongation factor GreA (158 aa).

Residues 53–73 (EQQGFIEGRIKEIEAKLSNAQ) are a coiled coil.

This sequence belongs to the GreA/GreB family.

Necessary for efficient RNA polymerase transcription elongation past template-encoded arresting sites. The arresting sites in DNA have the property of trapping a certain fraction of elongating RNA polymerases that pass through, resulting in locked ternary complexes. Cleavage of the nascent transcript by cleavage factors such as GreA or GreB allows the resumption of elongation from the new 3'terminus. GreA releases sequences of 2 to 3 nucleotides. The protein is Transcription elongation factor GreA of Thioalkalivibrio sulfidiphilus (strain HL-EbGR7).